A 191-amino-acid polypeptide reads, in one-letter code: Molybdenum cofactor guanylyltransferase (191 aa).

GTP is bound by residues 11-13 (LCG), lysine 23, aspartate 66, and aspartate 97. Mg(2+) is bound at residue aspartate 97.

Belongs to the MobA family. Monomer. Mg(2+) is required as a cofactor.

It is found in the cytoplasm. The catalysed reaction is Mo-molybdopterin + GTP + H(+) = Mo-molybdopterin guanine dinucleotide + diphosphate. In terms of biological role, transfers a GMP moiety from GTP to Mo-molybdopterin (Mo-MPT) cofactor (Moco or molybdenum cofactor) to form Mo-molybdopterin guanine dinucleotide (Mo-MGD) cofactor. This is Molybdenum cofactor guanylyltransferase from Campylobacter jejuni subsp. jejuni serotype O:2 (strain ATCC 700819 / NCTC 11168).